Consider the following 289-residue polypeptide: MKKLSFQQIILILQNYWQDYGCAILQPYDAHVGAGTFHPATVLRCLGTKPWFVAYVQPSRRPCDSRYGMHPNRMQHYYQFQVILKPSPDNIQDLYLKSLECLNLDLKTHDIRFVEDDWESPTLGASGLGWEVWCDGMEVSQFTYMQQVGGIECYPVACEITYGLERLALYIQGIDEVKELDWNGQIGEKALKYGEVDFEAERQFSKYNLEFADSEMLLRHFKDSGEQCERLVNVNLPMPAYDECLKASHYFNQLNALGVISVTERASYILRVRYLAKICCIKWLELSSE.

This sequence belongs to the class-II aminoacyl-tRNA synthetase family. Tetramer of two alpha and two beta subunits.

Its subcellular location is the cytoplasm. The enzyme catalyses tRNA(Gly) + glycine + ATP = glycyl-tRNA(Gly) + AMP + diphosphate. The polypeptide is Glycine--tRNA ligase alpha subunit (Rickettsia typhi (strain ATCC VR-144 / Wilmington)).